Reading from the N-terminus, the 511-residue chain is Cysteine--tRNA ligase 2, cytoplasmic (511 aa).

C34 contributes to the Zn(2+) binding site. A 'HIGH' region motif is present at residues 36-46 (ITAYDFSHIGH). Residues C214, H239, and E243 each contribute to the Zn(2+) site. A 'KMSKS' region motif is present at residues 271 to 275 (KMAKS). K274 serves as a coordination point for ATP. TPR repeat units follow at residues 315 to 348 (ESSS…DGGK) and 368 to 401 (SKML…LKKM).

It belongs to the class-I aminoacyl-tRNA synthetase family. Requires Zn(2+) as cofactor.

Its subcellular location is the cytoplasm. The protein localises to the cytosol. It catalyses the reaction tRNA(Cys) + L-cysteine + ATP = L-cysteinyl-tRNA(Cys) + AMP + diphosphate. This chain is Cysteine--tRNA ligase 2, cytoplasmic, found in Arabidopsis thaliana (Mouse-ear cress).